A 495-amino-acid chain; its full sequence is Alpha,alpha-trehalose-phosphate synthase [UDP-forming] 56 kDa subunit (495 aa).

D-glucose 6-phosphate is bound by residues Tyr102 and Asp156. Residues Arg293 and Lys298 each contribute to the UDP site. UDP-alpha-D-glucose-binding residues include Arg293 and Lys298. Arg331 contacts D-glucose 6-phosphate. UDP contacts are provided by residues Ile370 and 396-400; that span reads LVSYE. Residues Ile370 and 392–400 each bind UDP-alpha-D-glucose; that span reads DGMNLVSYE.

This sequence belongs to the glycosyltransferase 20 family. The trehalose synthase complex is composed of the two catalytic subunits TPS1 and TPS2 and at least one of the two regulatory subunits TPS3 or TSL1.

The protein resides in the cytoplasm. The enzyme catalyses D-glucose 6-phosphate + UDP-alpha-D-glucose = alpha,alpha-trehalose 6-phosphate + UDP + H(+). The protein operates within carbohydrate biosynthesis. Activated by fructose 6-phosphate. Inorganic phosphate inhibits the synthase activity in the complex, but activates the synthase activity in the free monomeric form. Functionally, synthase catalytic subunit of the trehalose synthase complex that catalyzes the production of trehalose from glucose-6-phosphate and UDP-alpha-D-glucose in a two step process. Can function independently of the complex. In Saccharomyces cerevisiae (strain ATCC 204508 / S288c) (Baker's yeast), this protein is Alpha,alpha-trehalose-phosphate synthase [UDP-forming] 56 kDa subunit.